Consider the following 362-residue polypeptide: 3-dehydroquinate synthase (362 aa).

NAD(+) contacts are provided by residues 95-99, 119-120, Lys132, and Lys141; these read GVVGD and TT. Residues Glu174, His238, and His255 each coordinate Zn(2+).

The protein belongs to the sugar phosphate cyclases superfamily. Dehydroquinate synthase family. Co(2+) is required as a cofactor. The cofactor is Zn(2+). NAD(+) serves as cofactor.

It localises to the cytoplasm. The catalysed reaction is 7-phospho-2-dehydro-3-deoxy-D-arabino-heptonate = 3-dehydroquinate + phosphate. It participates in metabolic intermediate biosynthesis; chorismate biosynthesis; chorismate from D-erythrose 4-phosphate and phosphoenolpyruvate: step 2/7. In terms of biological role, catalyzes the conversion of 3-deoxy-D-arabino-heptulosonate 7-phosphate (DAHP) to dehydroquinate (DHQ). This chain is 3-dehydroquinate synthase, found in Chlorobium luteolum (strain DSM 273 / BCRC 81028 / 2530) (Pelodictyon luteolum).